The primary structure comprises 436 residues: tRNA-2-methylthio-N(6)-dimethylallyladenosine synthase (436 aa).

The MTTase N-terminal domain maps to 1-115 (MRVFFKTYGC…IAEVLQKAAR (115 aa)). Cys10, Cys46, Cys80, Cys151, Cys155, and Cys158 together coordinate [4Fe-4S] cluster. Residues 137 to 368 (RFSKHHAWIT…LELQKQINRE (232 aa)) form the Radical SAM core domain. The 62-residue stretch at 371 to 432 (MQYLGKVVEI…AGPLYGKLQK (62 aa)) folds into the TRAM domain.

The protein belongs to the methylthiotransferase family. MiaB subfamily. Monomer. The cofactor is [4Fe-4S] cluster.

The protein resides in the cytoplasm. The enzyme catalyses N(6)-dimethylallyladenosine(37) in tRNA + (sulfur carrier)-SH + AH2 + 2 S-adenosyl-L-methionine = 2-methylsulfanyl-N(6)-dimethylallyladenosine(37) in tRNA + (sulfur carrier)-H + 5'-deoxyadenosine + L-methionine + A + S-adenosyl-L-homocysteine + 2 H(+). Functionally, catalyzes the methylthiolation of N6-(dimethylallyl)adenosine (i(6)A), leading to the formation of 2-methylthio-N6-(dimethylallyl)adenosine (ms(2)i(6)A) at position 37 in tRNAs that read codons beginning with uridine. The polypeptide is tRNA-2-methylthio-N(6)-dimethylallyladenosine synthase (Pseudothermotoga lettingae (strain ATCC BAA-301 / DSM 14385 / NBRC 107922 / TMO) (Thermotoga lettingae)).